Consider the following 190-residue polypeptide: MGAAGNTGSSGDSRELMSAADVGRTISRIAHQIIEKTALDGPDGPRVVLLGIPTRGVTLADRLARNIGEYSGVEVGHGALDITLYRDDLMQKPPRPLEATSIPAGGIDDALVILVDDVLYSGRSVRSALDALRDVGRPRVVQLAVLVDRGHRELPLRADYVGKNVPTSRSESVHVLLAEHDGADGVVISR.

A PRPP-binding motif is present at residues 112–124 (VILVDDVLYSGRS).

Belongs to the purine/pyrimidine phosphoribosyltransferase family. PyrR subfamily.

It catalyses the reaction UMP + diphosphate = 5-phospho-alpha-D-ribose 1-diphosphate + uracil. Its function is as follows. Regulates the transcription of the pyrimidine nucleotide (pyr) operon in response to exogenous pyrimidines. Also displays a weak uracil phosphoribosyltransferase activity which is not physiologically significant. This is Bifunctional protein PyrR from Mycolicibacterium paratuberculosis (strain ATCC BAA-968 / K-10) (Mycobacterium paratuberculosis).